We begin with the raw amino-acid sequence, 230 residues long: Modulator of macroautophagy TMEM150B (230 aa).

Met1 is a topological domain (cytoplasmic). Residues 2–22 (WAWALLPICLTIWATAGIWIV) form a helical membrane-spanning segment. Residues 23 to 50 (YGMSVSNGSVNLTDGFPFISLCGTYPPQ) lie on the Extracellular side of the membrane. N-linked (GlcNAc...) asparagine glycans are attached at residues Asn29 and Asn33. The chain crosses the membrane as a helical span at residues 51 to 71 (SCVFGQVLNVGAMLGVWISVI). Over 72 to 83 (RFQQIRDYGCHS) the chain is Cytoplasmic. A helical membrane pass occupies residues 84–104 (VLNSVSLAMGLLCALGTSIVG). The Extracellular portion of the chain corresponds to 105-115 (NFQQSNQLETH). A helical membrane pass occupies residues 116 to 136 (LAGAFLAFVIGNIYFWMQTVL). Residues 137-150 (TYMVKPKHGGCYIG) lie on the Cytoplasmic side of the membrane. Residues 151-171 (PIRFCLSVACTALIVLMAVFL) traverse the membrane as a helical segment. Topologically, residues 172-183 (KLNMKSISAICE) are extracellular. Residues 184-204 (WIVAMILFLLYGLFSVDFWHL) traverse the membrane as a helical segment. Residues 205-230 (DGHYFHVKKRTAIPNEVEVSTVTLNI) lie on the Cytoplasmic side of the membrane.

This sequence belongs to the DRAM/TMEM150 family.

The protein resides in the cell membrane. It localises to the endosome membrane. The protein localises to the cytoplasmic vesicle. It is found in the autophagosome membrane. Functionally, modulator of macroautophagy that causes accumulation of autophagosomes under basal conditions and enhances autophagic flux. Represses cell death and promotes long-term clonogenic survival of cells grown in the absence of glucose in a macroautophagy-independent manner. May have some role in extracellular matrix engulfment or growth factor receptor recycling, both of which can modulate cell survival. In Xenopus tropicalis (Western clawed frog), this protein is Modulator of macroautophagy TMEM150B.